The primary structure comprises 894 residues: Mitogen-activated protein kinase kinase kinase kinase 3 (894 aa).

An N-acetylmethionine modification is found at methionine 1. The Protein kinase domain maps to 16–273; the sequence is FELIQRIGSG…AEKLLQHPFV (258 aa). ATP is bound by residues 22-30 and lysine 45; that span reads IGSGTYGDV. Aspartate 136 serves as the catalytic Proton acceptor. Phosphoserine is present on serine 329. Residues 339 to 358 form a disordered region; sequence DPPLRKETEPHHELPDSDGF. Basic and acidic residues predominate over residues 340–353; the sequence is PPLRKETEPHHELP. Serine 398 carries the phosphoserine modification. The tract at residues 408–537 is disordered; the sequence is HVAHLEDDEG…VPKPISNGLP (130 aa). The span at 473–487 shows a compositional bias: pro residues; the sequence is HVPPRPPPPRLPPQK. Residues 508–520 are compositionally biased toward polar residues; that stretch reads LYQQQSEQRGTNL. One can recognise a CNH domain in the interval 556–867; that stretch reads PLKIHCATSW…IFRLLGSDRV (312 aa).

Belongs to the protein kinase superfamily. STE Ser/Thr protein kinase family. STE20 subfamily. As to quaternary structure, interacts with SH3GL2. Interaction appears to regulate MAP4K3-mediated JNK activation. Requires Mg(2+) as cofactor.

It catalyses the reaction L-seryl-[protein] + ATP = O-phospho-L-seryl-[protein] + ADP + H(+). The catalysed reaction is L-threonyl-[protein] + ATP = O-phospho-L-threonyl-[protein] + ADP + H(+). In terms of biological role, serine/threonine kinase that plays a role in the response to environmental stress. Appears to act upstream of the JUN N-terminal pathway. Activator of the Hippo signaling pathway which plays a pivotal role in organ size control and tumor suppression by restricting proliferation and promoting apoptosis. MAP4Ks act in parallel to and are partially redundant with STK3/MST2 and STK4/MST2 in the phosphorylation and activation of LATS1/2, and establish MAP4Ks as components of the expanded Hippo pathway. The protein is Mitogen-activated protein kinase kinase kinase kinase 3 (Map4k3) of Mus musculus (Mouse).